A 312-amino-acid polypeptide reads, in one-letter code: Malate dehydrogenase (312 aa).

NAD(+) is bound by residues 12-17 (GAGFTG) and Asp36. Substrate is bound by residues Arg87 and Arg93. Residues Asn100 and 123–125 (LTN) contribute to the NAD(+) site. Asn125 lines the substrate pocket. A Phosphoserine modification is found at Ser149. Arg156 is a binding site for substrate. His180 acts as the Proton acceptor in catalysis.

It belongs to the LDH/MDH superfamily. MDH type 3 family. In terms of assembly, homotetramer.

It carries out the reaction (S)-malate + NAD(+) = oxaloacetate + NADH + H(+). In terms of biological role, catalyzes the reversible oxidation of malate to oxaloacetate. This chain is Malate dehydrogenase, found in Bacillus israeli.